Here is a 668-residue protein sequence, read N- to C-terminus: mRNA cap guanine-N(7) methyltransferase (668 aa).

Positions 1 to 19 (MYDPARDSWEERDGDEARS) are enriched in basic and acidic residues. The tract at residues 1-281 (MYDPARDSWE…RAQVEEAMRA (281 aa)) is disordered. The span at 44 to 65 (GENNNTTDLQQHPDPSSKTTAS) shows a compositional bias: polar residues. The span at 73–88 (SQPAQPTTQTPPSVST) shows a compositional bias: low complexity. Over residues 100–129 (KASNPQSLTSTAQNQLNKSNTTMENTSGSA) the composition is skewed to polar residues. The segment covering 133–142 (PRADPSDKPN) has biased composition (basic and acidic residues). Residues 148-157 (ASPTDQNGSQ) are compositionally biased toward polar residues. Residues 257–279 (LVDRETLRRRQEERERAQVEEAM) show a composition bias toward basic and acidic residues. The 359-residue stretch at 310 to 668 (SKIKGLRSFN…FYHAFCFYKV (359 aa)) folds into the mRNA cap 0 methyltransferase domain. An mRNA-binding site is contributed by 319–320 (NN). S-adenosyl-L-methionine is bound by residues Lys-323, Gly-366, Asp-390, Asp-428, 471–473 (MFT), and Tyr-476. Residues 524-547 (ARQAQAKKEKSDEAPEDGEVEEDD) form a disordered region. Over residues 537–547 (APEDGEVEEDD) the composition is skewed to acidic residues.

This sequence belongs to the class I-like SAM-binding methyltransferase superfamily. mRNA cap 0 methyltransferase family.

It localises to the nucleus. It catalyses the reaction a 5'-end (5'-triphosphoguanosine)-ribonucleoside in mRNA + S-adenosyl-L-methionine = a 5'-end (N(7)-methyl 5'-triphosphoguanosine)-ribonucleoside in mRNA + S-adenosyl-L-homocysteine. In terms of biological role, responsible for methylating the 5'-cap structure of mRNAs. The protein is mRNA cap guanine-N(7) methyltransferase (abd1) of Aspergillus fumigatus (strain ATCC MYA-4609 / CBS 101355 / FGSC A1100 / Af293) (Neosartorya fumigata).